We begin with the raw amino-acid sequence, 240 residues long: Chromatin structure-remodeling complex protein BSH (240 aa).

It belongs to the SNF5 family. As to quaternary structure, interacts with SWI3A and SWI3B, but not with BRM. As to expression, expressed in roots, stems, leaves, flowers and siliques.

The protein resides in the nucleus. Functionally, component of a multiprotein complex equivalent of the yeast SWI/SNF complex, an ATP-dependent chromatin-remodeling complex, which is required for the positive and negative regulation of gene expression of a large number of genes. It changes chromatin structure by altering DNA-histone contacts within a nucleosome, leading eventually to a change in nucleosome position, thus facilitating or repressing binding of gene-specific transcription factors. The chain is Chromatin structure-remodeling complex protein BSH (BSH) from Arabidopsis thaliana (Mouse-ear cress).